A 150-amino-acid polypeptide reads, in one-letter code: D-aminoacyl-tRNA deacylase (150 aa).

The Gly-cisPro motif, important for rejection of L-amino acids signature appears at 138-139; that stretch reads GP.

The protein belongs to the DTD family. In terms of assembly, homodimer.

The protein resides in the cytoplasm. It carries out the reaction glycyl-tRNA(Ala) + H2O = tRNA(Ala) + glycine + H(+). The enzyme catalyses a D-aminoacyl-tRNA + H2O = a tRNA + a D-alpha-amino acid + H(+). In terms of biological role, an aminoacyl-tRNA editing enzyme that deacylates mischarged D-aminoacyl-tRNAs. Also deacylates mischarged glycyl-tRNA(Ala), protecting cells against glycine mischarging by AlaRS. Acts via tRNA-based rather than protein-based catalysis; rejects L-amino acids rather than detecting D-amino acids in the active site. By recycling D-aminoacyl-tRNA to D-amino acids and free tRNA molecules, this enzyme counteracts the toxicity associated with the formation of D-aminoacyl-tRNA entities in vivo and helps enforce protein L-homochirality. The sequence is that of D-aminoacyl-tRNA deacylase from Salinibacter ruber (strain DSM 13855 / M31).